A 370-amino-acid chain; its full sequence is Gibberellin 2-beta-dioxygenase 2 (370 aa).

Positions aspartate 186–proline 306 constitute a Fe2OG dioxygenase domain. Tyrosine 196 lines the 2-oxoglutarate pocket. Fe cation contacts are provided by histidine 224, aspartate 226, and histidine 287. 2 residues coordinate 2-oxoglutarate: arginine 297 and serine 299.

The protein belongs to the iron/ascorbate-dependent oxidoreductase family. GA2OX subfamily. It depends on Fe(2+) as a cofactor.

It carries out the reaction gibberellin A1 + 2-oxoglutarate + O2 = gibberellin A8 + succinate + CO2. Catalyzes the 2-beta-hydroxylation of several biologically active gibberellins, leading to the homeostatic regulation of their endogenous level. Catabolism of gibberellins (GAs) plays a central role in plant development. This Oryza sativa subsp. japonica (Rice) protein is Gibberellin 2-beta-dioxygenase 2.